A 707-amino-acid chain; its full sequence is Zinc finger protein 60 (707 aa).

The KRAB domain maps to valine 14 to glutamine 86. 19 consecutive C2H2-type zinc fingers follow at residues tyrosine 173 to histidine 195, tyrosine 201 to histidine 223, phenylalanine 229 to histidine 251, phenylalanine 257 to histidine 282, tyrosine 288 to histidine 310, phenylalanine 316 to histidine 338, phenylalanine 344 to histidine 366, phenylalanine 372 to histidine 394, phenylalanine 400 to histidine 422, tyrosine 428 to histidine 450, phenylalanine 456 to histidine 478, phenylalanine 484 to histidine 506, phenylalanine 512 to histidine 534, tyrosine 540 to histidine 562, phenylalanine 568 to histidine 590, tyrosine 596 to histidine 618, phenylalanine 624 to histidine 646, phenylalanine 652 to histidine 674, and tyrosine 680 to histidine 702.

This sequence belongs to the krueppel C2H2-type zinc-finger protein family. Expressed widely and evenly in most adult mouse tissues.

The protein resides in the nucleus. May have a role during differentiation processes. This Mus musculus (Mouse) protein is Zinc finger protein 60 (Zfp60).